The primary structure comprises 248 residues: Ubiquinone biosynthesis O-methyltransferase (248 aa).

4 residues coordinate S-adenosyl-L-methionine: Arg40, Gly71, Asp92, and Met135.

It belongs to the methyltransferase superfamily. UbiG/COQ3 family.

The catalysed reaction is a 3-demethylubiquinol + S-adenosyl-L-methionine = a ubiquinol + S-adenosyl-L-homocysteine + H(+). The enzyme catalyses a 3-(all-trans-polyprenyl)benzene-1,2-diol + S-adenosyl-L-methionine = a 2-methoxy-6-(all-trans-polyprenyl)phenol + S-adenosyl-L-homocysteine + H(+). The protein operates within cofactor biosynthesis; ubiquinone biosynthesis. Functionally, O-methyltransferase that catalyzes the 2 O-methylation steps in the ubiquinone biosynthetic pathway. This chain is Ubiquinone biosynthesis O-methyltransferase, found in Roseobacter denitrificans (strain ATCC 33942 / OCh 114) (Erythrobacter sp. (strain OCh 114)).